A 669-amino-acid chain; its full sequence is Threonine--tRNA ligase (669 aa).

The 58-residue stretch at Asp-3–Thr-60 folds into the TGS domain. Residues Asp-260–Pro-566 form a catalytic region. 3 residues coordinate Zn(2+): Cys-365, His-416, and His-543.

The protein belongs to the class-II aminoacyl-tRNA synthetase family. In terms of assembly, homodimer. The cofactor is Zn(2+).

It is found in the cytoplasm. It catalyses the reaction tRNA(Thr) + L-threonine + ATP = L-threonyl-tRNA(Thr) + AMP + diphosphate + H(+). Functionally, catalyzes the attachment of threonine to tRNA(Thr) in a two-step reaction: L-threonine is first activated by ATP to form Thr-AMP and then transferred to the acceptor end of tRNA(Thr). Also edits incorrectly charged L-seryl-tRNA(Thr). The sequence is that of Threonine--tRNA ligase from Pseudarthrobacter chlorophenolicus (strain ATCC 700700 / DSM 12829 / CIP 107037 / JCM 12360 / KCTC 9906 / NCIMB 13794 / A6) (Arthrobacter chlorophenolicus).